We begin with the raw amino-acid sequence, 768 residues long: Integrin beta-8 (768 aa).

Positions 1–42 (MCGSALGLPPAAFVRLRSCRPGPAAFLRAAWVLSLVLGLGRS) are cleaved as a signal peptide. Residues 43 to 683 (ENSRCASSHA…ECFSSPSYLR (641 aa)) are Extracellular-facing. Residues 46-95 (RCASSHAVSCSECLALGPDCGWCVHEDFISGGPRSERCDIVSNLISKGCP) enclose the PSI domain. 25 cysteine pairs are disulfide-bonded: C47–C65, C55–C469, C58–C83, C68–C94, C211–C218, C266–C307, C407–C419, C439–C467, C471–C491, C471–C494, C481–C494, C499–C528, C511–C526, C520–C531, C533–C546, C553–C567, C561–C572, C574–C583, C585–C609, C593–C607, C601–C612, C614–C624, C627–C630, C634–C661, and C640–C657. The VWFA domain occupies 146–384 (PVDLYYLVDV…NLVVEAYQKL (239 aa)). Residues D154 and S156 each contribute to the Mg(2+) site. D193 contacts Ca(2+). N-linked (GlcNAc...) asparagine glycosylation occurs at N233. The Ca(2+) site is built by N249, D251, P253, and E254. E254 contributes to the Mg(2+) binding site. A glycan (N-linked (GlcNAc...) asparagine) is linked at N402. N-linked (GlcNAc...) asparagine glycosylation is found at N421, N431, and N456. 4 I-EGF domains span residues 471–495 (CEAS…PQCQ), 499–547 (CHQE…KYCE), 548–584 (KDDF…DRCQ), and 585–625 (CPSA…RFCE). Residue N648 is glycosylated (N-linked (GlcNAc...) asparagine). A helical transmembrane segment spans residues 684 to 703 (IFFIIFIVTFLIGLLKILII). The Cytoplasmic portion of the chain corresponds to 704–768 (RQVILQWNSS…NAHETFRCNF (65 aa)).

It belongs to the integrin beta chain family. Heterodimer of an alpha and a beta subunit. Beta-8 (ITGB8) associates with alpha-V (ITGAV) to form ITGAV:ITGB8. ITGAV:ITGB8 interacts with TGFB1. As to expression, placenta, kidney, brain, ovary, uterus and in several transformed cells.

It is found in the cell membrane. Integrin alpha-V:beta-8 (ITGAV:ITGB8) is a receptor for fibronectin. It recognizes the sequence R-G-D in its ligands. Integrin alpha-V:beta-6 (ITGAV:ITGB6) mediates R-G-D-dependent release of transforming growth factor beta-1 (TGF-beta-1) from regulatory Latency-associated peptide (LAP), thereby playing a key role in TGF-beta-1 activation on the surface of activated regulatory T-cells (Tregs). Required during vasculogenesis. The sequence is that of Integrin beta-8 (ITGB8) from Oryctolagus cuniculus (Rabbit).